Consider the following 293-residue polypeptide: HTH-type transcriptional regulator ArgP (293 aa).

In terms of domain architecture, HTH lysR-type spans 4–60 (PDYRTLQALDAVIRERGFERAAQKLCITQSAVSQRIKQLENLFGQPLLVRTIPPHPT). Residues 21–40 (FERAAQKLCITQSAVSQRIK) constitute a DNA-binding region (H-T-H motif).

It belongs to the LysR transcriptional regulatory family. Homodimer.

Functionally, controls the transcription of genes involved in arginine and lysine metabolism. This chain is HTH-type transcriptional regulator ArgP, found in Sodalis glossinidius (strain morsitans).